The sequence spans 106 residues: Small ribosomal subunit protein bS16 (106 aa).

This sequence belongs to the bacterial ribosomal protein bS16 family.

This Wolbachia sp. subsp. Brugia malayi (strain TRS) protein is Small ribosomal subunit protein bS16.